The chain runs to 315 residues: MANITRMANHTGKLDFILMGLFRRSKHPALLSVVIFVVFLKALSGNAVLILLIHCDAHLHSPMYFFISQLSLMDMAYISVTVPKMLLDQVMGVNKVSAPECGMQMFLYLTLAGSEFFLLATMAYDRYVAICHPLRYPVLMNHRVCLFLASGCWFLGSVDGFMLTPITMSFPFCRSWEIHHFFCEVPAVTILSCSDTSLYETLMYLCCVLMLLIPVTIISSSYLLILLTVHRMNSAEGRKKAFATCSSHLTVVILFYGAAVYTYMLPSSYHTPEKDMMVSVFYTILTPVLNPLIYSLRNKDVMGALKKMLTVRFVL.

The Extracellular segment spans residues 1-29 (MANITRMANHTGKLDFILMGLFRRSKHPA). Asn-3 and Asn-9 each carry an N-linked (GlcNAc...) asparagine glycan. Residues 30-53 (LLSVVIFVVFLKALSGNAVLILLI) form a helical membrane-spanning segment. Topologically, residues 54 to 61 (HCDAHLHS) are cytoplasmic. The helical transmembrane segment at 62–83 (PMYFFISQLSLMDMAYISVTVP) threads the bilayer. Residues 84-104 (KMLLDQVMGVNKVSAPECGMQ) lie on the Extracellular side of the membrane. Cys-101 and Cys-193 are disulfide-bonded. Residues 105-124 (MFLYLTLAGSEFFLLATMAY) traverse the membrane as a helical segment. Topologically, residues 125-143 (DRYVAICHPLRYPVLMNHR) are cytoplasmic. The helical transmembrane segment at 144–162 (VCLFLASGCWFLGSVDGFM) threads the bilayer. Residues 163 to 199 (LTPITMSFPFCRSWEIHHFFCEVPAVTILSCSDTSLY) are Extracellular-facing. Residues 200-223 (ETLMYLCCVLMLLIPVTIISSSYL) form a helical membrane-spanning segment. Over 224 to 240 (LILLTVHRMNSAEGRKK) the chain is Cytoplasmic. The chain crosses the membrane as a helical span at residues 241 to 263 (AFATCSSHLTVVILFYGAAVYTY). Over 264–276 (MLPSSYHTPEKDM) the chain is Extracellular. A helical membrane pass occupies residues 277–296 (MVSVFYTILTPVLNPLIYSL). The Cytoplasmic portion of the chain corresponds to 297–315 (RNKDVMGALKKMLTVRFVL).

The protein belongs to the G-protein coupled receptor 1 family.

Its subcellular location is the cell membrane. Its function is as follows. Odorant receptor. The sequence is that of Olfactory receptor 2T5 (OR2T5) from Homo sapiens (Human).